We begin with the raw amino-acid sequence, 95 residues long: Integration host factor subunit beta (95 aa).

It belongs to the bacterial histone-like protein family. As to quaternary structure, heterodimer of an alpha and a beta chain.

This protein is one of the two subunits of integration host factor, a specific DNA-binding protein that functions in genetic recombination as well as in transcriptional and translational control. Involved in hydrogenase gene expression. The protein is Integration host factor subunit beta (ihfB) of Rhodobacter capsulatus (Rhodopseudomonas capsulata).